Consider the following 143-residue polypeptide: Transcription antitermination protein NusB (143 aa).

The protein belongs to the NusB family.

Its function is as follows. Involved in transcription antitermination. Required for transcription of ribosomal RNA (rRNA) genes. Binds specifically to the boxA antiterminator sequence of the ribosomal RNA (rrn) operons. The chain is Transcription antitermination protein NusB from Buchnera aphidicola subsp. Acyrthosiphon pisum (strain APS) (Acyrthosiphon pisum symbiotic bacterium).